The chain runs to 334 residues: MKVRIATYASHSALQILKGAKDEGFETIAFGSSKVKPLYTKYFPVADYFIEEKYPEEELLNLNAVVVPTGSFVAHLGIELVENMKVPYFGNKRVLRWESDRNLERKWLKKAGIRVPEVYEDPDDIEKPVIVKPHGAKGGKGYFLAKDPEDFWRKAEKFLGIKRKEDLKNIQIQEYVLGVPVYPHYFYSKVREELELMSIDRRYESNVDAIGRIPAKDQLEFDMDITYTVIGNIPIVLRESLLMDVIEAGERVVKAAEELMGGLWGPFCLEGVFTPDLEFVVFEISARIVAGTNIFVNGSPYTWLRYDRPVSTGRRIAMEIREAIENDMLEKVLT.

Serine 10, histidine 11, serine 71, and histidine 75 together coordinate 5-amino-1-(5-phospho-beta-D-ribosyl)imidazole-4-carboxamide. The ATP-grasp domain occupies isoleucine 78–glutamate 325. Residues lysine 132–tyrosine 142, glutamine 173–valine 176, and glutamate 204 each bind ATP. Asparagine 232 lines the 5-amino-1-(5-phospho-beta-D-ribosyl)imidazole-4-carboxamide pocket. Mg(2+) contacts are provided by glutamate 270 and glutamate 283.

Belongs to the phosphohexose mutase family. Homotrimer and homohexamer. The cofactor is Mg(2+). Mn(2+) serves as cofactor.

The catalysed reaction is 5-amino-1-(5-phospho-beta-D-ribosyl)imidazole-4-carboxamide + formate + ATP = 5-formamido-1-(5-phospho-D-ribosyl)imidazole-4-carboxamide + ADP + phosphate. It participates in purine metabolism; IMP biosynthesis via de novo pathway; 5-formamido-1-(5-phospho-D-ribosyl)imidazole-4-carboxamide from 5-amino-1-(5-phospho-D-ribosyl)imidazole-4-carboxamide (formate route): step 1/1. Functionally, catalyzes the ATP- and formate-dependent formylation of 5-aminoimidazole-4-carboxamide-1-beta-d-ribofuranosyl 5'-monophosphate (AICAR) to 5-formaminoimidazole-4-carboxamide-1-beta-d-ribofuranosyl 5'-monophosphate (FAICAR) in the absence of folates. The chain is 5-formaminoimidazole-4-carboxamide-1-(beta)-D-ribofuranosyl 5'-monophosphate synthetase from Pyrococcus furiosus (strain ATCC 43587 / DSM 3638 / JCM 8422 / Vc1).